Reading from the N-terminus, the 187-residue chain is Elongation factor P (187 aa).

It belongs to the elongation factor P family.

Its subcellular location is the cytoplasm. It functions in the pathway protein biosynthesis; polypeptide chain elongation. Its function is as follows. Involved in peptide bond synthesis. Stimulates efficient translation and peptide-bond synthesis on native or reconstituted 70S ribosomes in vitro. Probably functions indirectly by altering the affinity of the ribosome for aminoacyl-tRNA, thus increasing their reactivity as acceptors for peptidyl transferase. This is Elongation factor P (efp) from Treponema pallidum (strain Nichols).